We begin with the raw amino-acid sequence, 448 residues long: Probable glycine dehydrogenase (decarboxylating) subunit 1 (448 aa).

It belongs to the GcvP family. N-terminal subunit subfamily. In terms of assembly, the glycine cleavage system is composed of four proteins: P, T, L and H. In this organism, the P 'protein' is a heterodimer of two subunits.

It catalyses the reaction N(6)-[(R)-lipoyl]-L-lysyl-[glycine-cleavage complex H protein] + glycine + H(+) = N(6)-[(R)-S(8)-aminomethyldihydrolipoyl]-L-lysyl-[glycine-cleavage complex H protein] + CO2. In terms of biological role, the glycine cleavage system catalyzes the degradation of glycine. The P protein binds the alpha-amino group of glycine through its pyridoxal phosphate cofactor; CO(2) is released and the remaining methylamine moiety is then transferred to the lipoamide cofactor of the H protein. The protein is Probable glycine dehydrogenase (decarboxylating) subunit 1 of Rhodospirillum rubrum (strain ATCC 11170 / ATH 1.1.1 / DSM 467 / LMG 4362 / NCIMB 8255 / S1).